The following is a 271-amino-acid chain: Aspartate/glutamate leucyltransferase (271 aa).

Belongs to the R-transferase family. Bpt subfamily.

The protein localises to the cytoplasm. It carries out the reaction N-terminal L-glutamyl-[protein] + L-leucyl-tRNA(Leu) = N-terminal L-leucyl-L-glutamyl-[protein] + tRNA(Leu) + H(+). The enzyme catalyses N-terminal L-aspartyl-[protein] + L-leucyl-tRNA(Leu) = N-terminal L-leucyl-L-aspartyl-[protein] + tRNA(Leu) + H(+). Its function is as follows. Functions in the N-end rule pathway of protein degradation where it conjugates Leu from its aminoacyl-tRNA to the N-termini of proteins containing an N-terminal aspartate or glutamate. This is Aspartate/glutamate leucyltransferase from Acinetobacter baylyi (strain ATCC 33305 / BD413 / ADP1).